The sequence spans 132 residues: Prefoldin subunit alpha (132 aa).

It belongs to the prefoldin subunit alpha family. In terms of assembly, heterohexamer of two alpha and four beta subunits.

It localises to the cytoplasm. Its function is as follows. Molecular chaperone capable of stabilizing a range of proteins. Seems to fulfill an ATP-independent, HSP70-like function in archaeal de novo protein folding. The chain is Prefoldin subunit alpha from Pyrobaculum islandicum (strain DSM 4184 / JCM 9189 / GEO3).